The sequence spans 382 residues: UDP-N-acetylglucosamine--N-acetylmuramyl-(pentapeptide) pyrophosphoryl-undecaprenol N-acetylglucosamine transferase (382 aa).

UDP-N-acetyl-alpha-D-glucosamine-binding positions include 17–19, asparagine 137, arginine 179, serine 213, and glutamine 308; that span reads TAG.

It belongs to the glycosyltransferase 28 family. MurG subfamily.

It is found in the cell membrane. The enzyme catalyses di-trans,octa-cis-undecaprenyl diphospho-N-acetyl-alpha-D-muramoyl-L-alanyl-D-glutamyl-meso-2,6-diaminopimeloyl-D-alanyl-D-alanine + UDP-N-acetyl-alpha-D-glucosamine = di-trans,octa-cis-undecaprenyl diphospho-[N-acetyl-alpha-D-glucosaminyl-(1-&gt;4)]-N-acetyl-alpha-D-muramoyl-L-alanyl-D-glutamyl-meso-2,6-diaminopimeloyl-D-alanyl-D-alanine + UDP + H(+). It functions in the pathway cell wall biogenesis; peptidoglycan biosynthesis. Functionally, cell wall formation. Catalyzes the transfer of a GlcNAc subunit on undecaprenyl-pyrophosphoryl-MurNAc-pentapeptide (lipid intermediate I) to form undecaprenyl-pyrophosphoryl-MurNAc-(pentapeptide)GlcNAc (lipid intermediate II). The sequence is that of UDP-N-acetylglucosamine--N-acetylmuramyl-(pentapeptide) pyrophosphoryl-undecaprenol N-acetylglucosamine transferase from Rhodococcus jostii (strain RHA1).